A 186-amino-acid chain; its full sequence is ATP synthase subunit b (186 aa).

A helical membrane pass occupies residues I28 to P48.

It belongs to the ATPase B chain family. F-type ATPases have 2 components, F(1) - the catalytic core - and F(0) - the membrane proton channel. F(1) has five subunits: alpha(3), beta(3), gamma(1), delta(1), epsilon(1). F(0) has three main subunits: a(1), b(2) and c(10-14). The alpha and beta chains form an alternating ring which encloses part of the gamma chain. F(1) is attached to F(0) by a central stalk formed by the gamma and epsilon chains, while a peripheral stalk is formed by the delta and b chains.

It localises to the cell membrane. Functionally, f(1)F(0) ATP synthase produces ATP from ADP in the presence of a proton or sodium gradient. F-type ATPases consist of two structural domains, F(1) containing the extramembraneous catalytic core and F(0) containing the membrane proton channel, linked together by a central stalk and a peripheral stalk. During catalysis, ATP synthesis in the catalytic domain of F(1) is coupled via a rotary mechanism of the central stalk subunits to proton translocation. Component of the F(0) channel, it forms part of the peripheral stalk, linking F(1) to F(0). The sequence is that of ATP synthase subunit b from Corynebacterium jeikeium (strain K411).